A 421-amino-acid polypeptide reads, in one-letter code: 4-hydroxy-3-methylbut-2-en-1-yl diphosphate synthase (flavodoxin) (421 aa).

The interval 1-20 is disordered; that stretch reads MHDAVTRPTPPSDATSWPRR. [4Fe-4S] cluster is bound by residues Cys311, Cys314, Cys357, and Glu364.

This sequence belongs to the IspG family. The cofactor is [4Fe-4S] cluster.

It catalyses the reaction (2E)-4-hydroxy-3-methylbut-2-enyl diphosphate + oxidized [flavodoxin] + H2O + 2 H(+) = 2-C-methyl-D-erythritol 2,4-cyclic diphosphate + reduced [flavodoxin]. Its pathway is isoprenoid biosynthesis; isopentenyl diphosphate biosynthesis via DXP pathway; isopentenyl diphosphate from 1-deoxy-D-xylulose 5-phosphate: step 5/6. Functionally, converts 2C-methyl-D-erythritol 2,4-cyclodiphosphate (ME-2,4cPP) into 1-hydroxy-2-methyl-2-(E)-butenyl 4-diphosphate. The protein is 4-hydroxy-3-methylbut-2-en-1-yl diphosphate synthase (flavodoxin) of Stenotrophomonas maltophilia (strain R551-3).